Reading from the N-terminus, the 358-residue chain is Molybdenum import ATP-binding protein ModC (358 aa).

Positions 3 to 228 (INVKQKLGDL…LEMRPWLPAK (226 aa)) constitute an ABC transporter domain. 30–37 (GRSGAGKT) is an ATP binding site. Positions 289 to 356 (QTSIRNVLLA…IKGVSVTKDD (68 aa)) constitute a Mop domain.

This sequence belongs to the ABC transporter superfamily. Molybdate importer (TC 3.A.1.8) family. In terms of assembly, the complex is composed of two ATP-binding proteins (ModC), two transmembrane proteins (ModB) and a solute-binding protein (ModA).

It is found in the cell inner membrane. The enzyme catalyses molybdate(out) + ATP + H2O = molybdate(in) + ADP + phosphate + H(+). Functionally, part of the ABC transporter complex ModABC involved in molybdenum import. Responsible for energy coupling to the transport system. In Photobacterium profundum (strain SS9), this protein is Molybdenum import ATP-binding protein ModC.